Here is a 769-residue protein sequence, read N- to C-terminus: Protein transport protein sec39 (769 aa).

The protein belongs to the SEC39 family. Component of a peripheral membrane protein complex consisting of dsl1, sec39 and tip20.

It localises to the endoplasmic reticulum membrane. Functionally, required for protein transport between the Golgi and the endoplasmic reticulum. May contribute to tethering of coatomer-coated retrograde transport vesicles to the ER membrane through interaction with and stabilization of the SNARE complex. The chain is Protein transport protein sec39 from Schizosaccharomyces pombe (strain 972 / ATCC 24843) (Fission yeast).